We begin with the raw amino-acid sequence, 69 residues long: DNA gyrase inhibitor YacG (69 aa).

Residues Cys13, Cys16, Cys32, and Cys36 each coordinate Zn(2+).

It belongs to the DNA gyrase inhibitor YacG family. In terms of assembly, interacts with GyrB. Zn(2+) is required as a cofactor.

Its function is as follows. Inhibits all the catalytic activities of DNA gyrase by preventing its interaction with DNA. Acts by binding directly to the C-terminal domain of GyrB, which probably disrupts DNA binding by the gyrase. This Neisseria gonorrhoeae (strain ATCC 700825 / FA 1090) protein is DNA gyrase inhibitor YacG.